Reading from the N-terminus, the 856-residue chain is Glucans biosynthesis glucosyltransferase H (856 aa).

Helical transmembrane passes span 144–164 (ILLV…KGIM), 198–218 (ILIL…TALM), 517–537 (VFLT…FLVL), 574–594 (LFST…ILIW), 608–628 (TLSM…RMIF), and 684–704 (FLWW…VSVI).

The protein belongs to the glycosyltransferase 2 family. OpgH subfamily.

It localises to the cell inner membrane. It functions in the pathway glycan metabolism; osmoregulated periplasmic glucan (OPG) biosynthesis. Functionally, involved in the biosynthesis of osmoregulated periplasmic glucans (OPGs). The chain is Glucans biosynthesis glucosyltransferase H from Pseudomonas fluorescens (strain ATCC BAA-477 / NRRL B-23932 / Pf-5).